The following is a 315-amino-acid chain: ATP synthase gamma chain (315 aa).

F-type ATPases have 2 components, CF(1) - the catalytic core - and CF(0) - the membrane proton channel. CF(1) has five subunits: alpha(3), beta(3), gamma(1), delta(1), epsilon(1). CF(0) has four main subunits: a(1), b(1), b'(1) and c(9-12).

The protein localises to the cellular thylakoid membrane. Functionally, produces ATP from ADP in the presence of a proton gradient across the membrane. The gamma chain is believed to be important in regulating ATPase activity and the flow of protons through the CF(0) complex. In terms of biological role, the complex from the organism is particularly stable to disruption and remains functional after 6 hrs at 55 degrees Celsius. This is ATP synthase gamma chain from Thermosynechococcus vestitus (strain NIES-2133 / IAM M-273 / BP-1).